The following is a 425-amino-acid chain: Glutamyl-tRNA reductase (425 aa).

Residues 49 to 52 (TCNR), S107, 112 to 114 (EPQ), and Q118 contribute to the substrate site. The active-site Nucleophile is the C50. 187-192 (GAGETI) contributes to the NADP(+) binding site.

It belongs to the glutamyl-tRNA reductase family. In terms of assembly, homodimer.

It catalyses the reaction (S)-4-amino-5-oxopentanoate + tRNA(Glu) + NADP(+) = L-glutamyl-tRNA(Glu) + NADPH + H(+). The protein operates within porphyrin-containing compound metabolism; protoporphyrin-IX biosynthesis; 5-aminolevulinate from L-glutamyl-tRNA(Glu): step 1/2. Functionally, catalyzes the NADPH-dependent reduction of glutamyl-tRNA(Glu) to glutamate 1-semialdehyde (GSA). The chain is Glutamyl-tRNA reductase from Pseudomonas putida (strain ATCC 700007 / DSM 6899 / JCM 31910 / BCRC 17059 / LMG 24140 / F1).